Consider the following 173-residue polypeptide: Nucleoside-triphosphatase THEP1 (173 aa).

Residues 9–16 (GPPGVGKT) and 97–104 (LYVIDEVG) contribute to the ATP site.

It belongs to the THEP1 NTPase family.

The enzyme catalyses a ribonucleoside 5'-triphosphate + H2O = a ribonucleoside 5'-diphosphate + phosphate + H(+). In terms of biological role, has nucleotide phosphatase activity towards ATP, GTP, CTP, TTP and UTP. May hydrolyze nucleoside diphosphates with lower efficiency. The protein is Nucleoside-triphosphatase THEP1 of Caldivirga maquilingensis (strain ATCC 700844 / DSM 13496 / JCM 10307 / IC-167).